Consider the following 291-residue polypeptide: Beta-lactamase CTX-M-14 (291 aa).

Positions 1–28 (MVTKRVQRMMFAAAACIPLLLGSAPLYA) are cleaved as a signal peptide. Catalysis depends on S73, which acts as the Nucleophile; acyl-ester intermediate. Residues K76, S133, E169, and S240 each contribute to the a beta-lactam site.

Belongs to the class-A beta-lactamase family. As to quaternary structure, monomer.

It localises to the secreted. The enzyme catalyses a beta-lactam + H2O = a substituted beta-amino acid. Its activity is regulated as follows. Inhibited by the beta-lactamase-blocking agents clavulanic acid, tazobactam and sulbactam. In terms of biological role, extended-spectrum beta-lactamase (ESBL) which confers resistance to penicillins, as well as first, second, and third-generation cephalosporins. Has cefotaxime-hydrolyzing activity. The polypeptide is Beta-lactamase CTX-M-14 (Escherichia coli).